We begin with the raw amino-acid sequence, 338 residues long: Methionine import ATP-binding protein MetN 1 (338 aa).

The ABC transporter domain occupies 2–241 (IELHQVSKSF…AKHATTKRFV (240 aa)). Position 38–45 (38–45 (GYSGAGKS)) interacts with ATP.

Belongs to the ABC transporter superfamily. Methionine importer (TC 3.A.1.24) family. In terms of assembly, the complex is composed of two ATP-binding proteins (MetN), two transmembrane proteins (MetI) and a solute-binding protein (MetQ).

The protein resides in the cell membrane. It carries out the reaction L-methionine(out) + ATP + H2O = L-methionine(in) + ADP + phosphate + H(+). The enzyme catalyses D-methionine(out) + ATP + H2O = D-methionine(in) + ADP + phosphate + H(+). Functionally, part of the ABC transporter complex MetNIQ involved in methionine import. Responsible for energy coupling to the transport system. This chain is Methionine import ATP-binding protein MetN 1, found in Listeria innocua serovar 6a (strain ATCC BAA-680 / CLIP 11262).